A 304-amino-acid chain; its full sequence is Tyrosine recombinase XerD (304 aa).

In terms of domain architecture, Core-binding (CB) spans 6 to 91 (EPWRKTLETF…AIRSFHKFLL (86 aa)). A Tyr recombinase domain is found at 112-298 (YLPSVLTIEE…DRSFIKEVHK (187 aa)). Active-site residues include arginine 155, lysine 179, histidine 250, arginine 253, and histidine 276. The O-(3'-phospho-DNA)-tyrosine intermediate role is filled by tyrosine 285.

This sequence belongs to the 'phage' integrase family. XerD subfamily. As to quaternary structure, forms a cyclic heterotetrameric complex composed of two molecules of XerC and two molecules of XerD.

The protein resides in the cytoplasm. Functionally, site-specific tyrosine recombinase, which acts by catalyzing the cutting and rejoining of the recombining DNA molecules. The XerC-XerD complex is essential to convert dimers of the bacterial chromosome into monomers to permit their segregation at cell division. It also contributes to the segregational stability of plasmids. This is Tyrosine recombinase XerD from Chlorobaculum tepidum (strain ATCC 49652 / DSM 12025 / NBRC 103806 / TLS) (Chlorobium tepidum).